A 283-amino-acid chain; its full sequence is 4-hydroxy-3-methylbut-2-enyl diphosphate reductase (283 aa).

C12 is a binding site for [4Fe-4S] cluster. H40 and H72 together coordinate (2E)-4-hydroxy-3-methylbut-2-enyl diphosphate. H40 and H72 together coordinate dimethylallyl diphosphate. 2 residues coordinate isopentenyl diphosphate: H40 and H72. C94 contributes to the [4Fe-4S] cluster binding site. H122 serves as a coordination point for (2E)-4-hydroxy-3-methylbut-2-enyl diphosphate. H122 lines the dimethylallyl diphosphate pocket. H122 is an isopentenyl diphosphate binding site. E124 functions as the Proton donor in the catalytic mechanism. Position 160 (T160) interacts with (2E)-4-hydroxy-3-methylbut-2-enyl diphosphate. C188 provides a ligand contact to [4Fe-4S] cluster. Residues S216, N218, and S259 each contribute to the (2E)-4-hydroxy-3-methylbut-2-enyl diphosphate site. The dimethylallyl diphosphate site is built by S216, N218, and S259. 3 residues coordinate isopentenyl diphosphate: S216, N218, and S259.

Belongs to the IspH family. It depends on [4Fe-4S] cluster as a cofactor.

The catalysed reaction is isopentenyl diphosphate + 2 oxidized [2Fe-2S]-[ferredoxin] + H2O = (2E)-4-hydroxy-3-methylbut-2-enyl diphosphate + 2 reduced [2Fe-2S]-[ferredoxin] + 2 H(+). It catalyses the reaction dimethylallyl diphosphate + 2 oxidized [2Fe-2S]-[ferredoxin] + H2O = (2E)-4-hydroxy-3-methylbut-2-enyl diphosphate + 2 reduced [2Fe-2S]-[ferredoxin] + 2 H(+). The protein operates within isoprenoid biosynthesis; dimethylallyl diphosphate biosynthesis; dimethylallyl diphosphate from (2E)-4-hydroxy-3-methylbutenyl diphosphate: step 1/1. Its pathway is isoprenoid biosynthesis; isopentenyl diphosphate biosynthesis via DXP pathway; isopentenyl diphosphate from 1-deoxy-D-xylulose 5-phosphate: step 6/6. Its function is as follows. Catalyzes the conversion of 1-hydroxy-2-methyl-2-(E)-butenyl 4-diphosphate (HMBPP) into a mixture of isopentenyl diphosphate (IPP) and dimethylallyl diphosphate (DMAPP). Acts in the terminal step of the DOXP/MEP pathway for isoprenoid precursor biosynthesis. The protein is 4-hydroxy-3-methylbut-2-enyl diphosphate reductase of Dictyoglomus turgidum (strain DSM 6724 / Z-1310).